Here is a 253-residue protein sequence, read N- to C-terminus: Tetraspanin-3 (253 aa).

At 1 to 11 (MGQCGITSSKT) the chain is on the cytoplasmic side. A helical membrane pass occupies residues 12-32 (VLVFLNLIFWGAAGILCYVGA). Residues 33–50 (YVFITYDDYDHFFEDVYT) lie on the Extracellular side of the membrane. Residues 51 to 71 (LIPAVVIIAVGALLFIIGLIG) form a helical membrane-spanning segment. The Cytoplasmic segment spans residues 72–85 (CCATIRESRCGLAT). Residues 86–106 (FVIILLLVFVTEVVVVVLGYV) form a helical membrane-spanning segment. Residues 107–212 (YRAKVENEVD…KKLQEIMMHV (106 aa)) lie on the Extracellular side of the membrane. N-linked (GlcNAc...) asparagine glycosylation is found at asparagine 127, asparagine 152, asparagine 167, and asparagine 183. A helical transmembrane segment spans residues 213 to 233 (IWAALAFAAIQLLGMLCACIV). Over 234 to 253 (LCRRSRDPAYELLITGGTYA) the chain is Cytoplasmic.

Belongs to the tetraspanin (TM4SF) family. As to quaternary structure, interacts with claudin-11/CLDN11 and integrins.

It localises to the membrane. Functionally, regulates the proliferation and migration of oligodendrocytes, a process essential for normal myelination and repair. The protein is Tetraspanin-3 (TSPAN3) of Homo sapiens (Human).